Here is a 429-residue protein sequence, read N- to C-terminus: Threonine synthase (429 aa).

N6-(pyridoxal phosphate)lysine is present on lysine 108.

This sequence belongs to the threonine synthase family. It depends on pyridoxal 5'-phosphate as a cofactor.

The enzyme catalyses O-phospho-L-homoserine + H2O = L-threonine + phosphate. Its pathway is amino-acid biosynthesis; L-threonine biosynthesis; L-threonine from L-aspartate: step 5/5. In terms of biological role, catalyzes the gamma-elimination of phosphate from L-phosphohomoserine and the beta-addition of water to produce L-threonine. In Buchnera aphidicola subsp. Acyrthosiphon pisum (strain APS) (Acyrthosiphon pisum symbiotic bacterium), this protein is Threonine synthase (thrC).